Reading from the N-terminus, the 865-residue chain is Protein translocase subunit SecA (865 aa).

ATP is bound by residues Gln-93, 111 to 115 (GEGKT), and Asp-501. Zn(2+) contacts are provided by Cys-841, Cys-843, Cys-852, and Cys-853.

Belongs to the SecA family. As to quaternary structure, monomer and homodimer. Part of the essential Sec protein translocation apparatus which comprises SecA, SecYEG and auxiliary proteins SecDF-YajC and YidC. The cofactor is Zn(2+).

Its subcellular location is the cell inner membrane. It localises to the cytoplasm. The catalysed reaction is ATP + H2O + cellular proteinSide 1 = ADP + phosphate + cellular proteinSide 2.. Functionally, part of the Sec protein translocase complex. Interacts with the SecYEG preprotein conducting channel. Has a central role in coupling the hydrolysis of ATP to the transfer of proteins into and across the cell membrane, serving as an ATP-driven molecular motor driving the stepwise translocation of polypeptide chains across the membrane. The chain is Protein translocase subunit SecA from Helicobacter pylori (strain Shi470).